A 145-amino-acid chain; its full sequence is Histone H2B.10 (145 aa).

Positions 1–15 are enriched in basic and acidic residues; the sequence is MAKADKKPAEKKPAE. A disordered region spans residues 1–53; sequence MAKADKKPAEKKPAEKTPAAEPAAAAEKKPKAGKKLPKEPAGAGDKKKKRSKK. At Lys3 the chain carries N6-methyllysine. Residues Lys6 and Lys11 each carry the N6-acetyllysine modification. At Lys12 the chain carries N6,N6-dimethyllysine. N6-acetyllysine is present on residues Lys16, Lys28, and Lys34. The span at 16 to 25 shows a compositional bias: low complexity; it reads KTPAAEPAAA. At Lys35 the chain carries N6-acetyllysine; partial. Lys141 is covalently cross-linked (Glycyl lysine isopeptide (Lys-Gly) (interchain with G-Cter in ubiquitin)).

It belongs to the histone H2B family. As to quaternary structure, the nucleosome is a histone octamer containing two molecules each of H2A, H2B, H3 and H4 assembled in one H3-H4 heterotetramer and two H2A-H2B heterodimers. The octamer wraps approximately 147 bp of DNA. Interacts with ORTH2. Post-translationally, can be acetylated to form H2BK5ac, H2BK10ac, H2BK15ac, H2BK27ac, H2BK33ac and H2BK34ac. Dimethylated to form H2BK11me2. In terms of processing, monoubiquitinated by BRE1 to form H2BK143ub1 and deubiquitinated by UBP26. Required for heterochromatic histone H3 di- and trimethylation at H3K4me. May give a specific tag for epigenetic transcriptional activation.

The protein localises to the nucleus. It localises to the chromosome. Its function is as follows. Core component of nucleosome. Nucleosomes wrap and compact DNA into chromatin, limiting DNA accessibility to the cellular machineries which require DNA as a template. Histones thereby play a central role in transcription regulation, DNA repair, DNA replication and chromosomal stability. DNA accessibility is regulated via a complex set of post-translational modifications of histones, also called histone code, and nucleosome remodeling. The chain is Histone H2B.10 from Arabidopsis thaliana (Mouse-ear cress).